Reading from the N-terminus, the 158-residue chain is Large ribosomal subunit protein uL11 (158 aa).

The disordered stretch occupies residues 1 to 21 (MAQSVKTMVEGGKATTGPPIG).

This sequence belongs to the universal ribosomal protein uL11 family. In terms of assembly, part of the ribosomal stalk of the 50S ribosomal subunit. Interacts with L10 and the large rRNA to form the base of the stalk. L10 forms an elongated spine to which L12 dimers bind in a sequential fashion forming a multimeric L10(L12)X complex.

In terms of biological role, forms part of the ribosomal stalk which helps the ribosome interact with GTP-bound translation factors. This chain is Large ribosomal subunit protein uL11, found in Thermoplasma volcanium (strain ATCC 51530 / DSM 4299 / JCM 9571 / NBRC 15438 / GSS1).